The primary structure comprises 445 residues: Probable glycine dehydrogenase (decarboxylating) subunit 1 (445 aa).

Belongs to the GcvP family. N-terminal subunit subfamily. In terms of assembly, the glycine cleavage system is composed of four proteins: P, T, L and H. In this organism, the P 'protein' is a heterodimer of two subunits.

It catalyses the reaction N(6)-[(R)-lipoyl]-L-lysyl-[glycine-cleavage complex H protein] + glycine + H(+) = N(6)-[(R)-S(8)-aminomethyldihydrolipoyl]-L-lysyl-[glycine-cleavage complex H protein] + CO2. Functionally, the glycine cleavage system catalyzes the degradation of glycine. The P protein binds the alpha-amino group of glycine through its pyridoxal phosphate cofactor; CO(2) is released and the remaining methylamine moiety is then transferred to the lipoamide cofactor of the H protein. The protein is Probable glycine dehydrogenase (decarboxylating) subunit 1 of Anaeromyxobacter dehalogenans (strain 2CP-1 / ATCC BAA-258).